A 348-amino-acid chain; its full sequence is Phosphate acyltransferase (348 aa).

The protein belongs to the PlsX family. Homodimer. Probably interacts with PlsY.

The protein resides in the cytoplasm. The enzyme catalyses a fatty acyl-[ACP] + phosphate = an acyl phosphate + holo-[ACP]. Its pathway is lipid metabolism; phospholipid metabolism. Functionally, catalyzes the reversible formation of acyl-phosphate (acyl-PO(4)) from acyl-[acyl-carrier-protein] (acyl-ACP). This enzyme utilizes acyl-ACP as fatty acyl donor, but not acyl-CoA. This chain is Phosphate acyltransferase, found in Rhizobium rhizogenes (strain K84 / ATCC BAA-868) (Agrobacterium radiobacter).